Here is a 325-residue protein sequence, read N- to C-terminus: MATPLPPPSPRHLRLLRLLLSGLVLGAALRGAAAGHPDVAACPGSLDCALKRRARCPPGAHACGPCLQPFQEDQQGLCVPRMRRPPGGGRPQPRLEDEIDFLAQELARKESGHSTPPLPKDRQRLPEPATLGFSARGQGLELGLPSTPGTPTPTPHTSLGSPVSSDPVHMSPLEPRGGQGDGLALVLILAFCVAGAAALSVASLCWCRLQREIRLTQKADYATAKAPGSPAAPRISPGDQRLAQSAEMYHYQHQRQQMLCLERHKEPPKELDTASSDEENEDGDFTVYECPGLAPTGEMEVRNPLFDHAALSAPLPAPSSPPALP.

Positions 1–34 (MATPLPPPSPRHLRLLRLLLSGLVLGAALRGAAA) are cleaved as a signal peptide. The segment at 138-175 (QGLELGLPSTPGTPTPTPHTSLGSPVSSDPVHMSPLEP) is disordered. A helical transmembrane segment spans residues 182 to 202 (GLALVLILAFCVAGAAALSVA). Residue Ser-229 is modified to Phosphoserine. Residues 266-290 (EPPKELDTASSDEENEDGDFTVYEC) are disordered. A compositionally biased stretch (acidic residues) spans 275–284 (SSDEENEDGD).

The protein belongs to the NPDC1/cab-1 family. As to expression, strongly expressed in adult brain; especially in hippocampus, frontal lobe and temporal lobe.

The protein localises to the membrane. Suppresses oncogenic transformation in neural and non-neural cells and down-regulates neural cell proliferation. Might be involved in transcriptional regulation. This is Neural proliferation differentiation and control protein 1 (NPDC1) from Homo sapiens (Human).